Reading from the N-terminus, the 132-residue chain is Antileukoproteinase (132 aa).

The signal sequence occupies residues 1–25 (MKSSGLFPFLVLLALGTLAPWAVEG). 2 WAP domains span residues 28–76 (KSFK…LDPV) and 82–130 (TRRK…VSPV). 8 disulfides stabilise this stretch: Cys-35–Cys-64, Cys-43–Cys-68, Cys-51–Cys-63, Cys-57–Cys-72, Cys-89–Cys-118, Cys-96–Cys-122, Cys-105–Cys-117, and Cys-111–Cys-126. The tract at residues 84 to 132 (RKPGKCPVTYGQCLMLNPPNFCEMDGQCKRDLKCCMGMCGKSCVSPVKA) is elastase inhibitory domain.

As to quaternary structure, interacts with GRN; interaction protects progranulin from proteolysis. Detected in blood plasma. Detected in bone marrow myeloid cells. Detected in airway sputum. Detected in parotid gland secretions. Detected in seminal plasma (at protein level). Detected in uterus cervix.

Its subcellular location is the secreted. In terms of biological role, acid-stable proteinase inhibitor with strong affinities for trypsin, chymotrypsin, elastase, and cathepsin G. Modulates the inflammatory and immune responses after bacterial infection, and after infection by the intracellular parasite L.major. Down-regulates responses to bacterial lipopolysaccharide (LPS). Plays a role in regulating the activation of NF-kappa-B and inflammatory responses. Has antimicrobial activity against mycobacteria, but not against salmonella. Contributes to normal resistance against infection by M.tuberculosis. Required for normal resistance to infection by L.major. Required for normal wound healing, probably by preventing tissue damage by limiting protease activity. Together with ELANE, required for normal differentiation and proliferation of bone marrow myeloid cells. This Homo sapiens (Human) protein is Antileukoproteinase (SLPI).